A 627-amino-acid polypeptide reads, in one-letter code: Carnitine O-acetyltransferase, mitochondrial (627 aa).

Catalysis depends on His-336, which acts as the Proton acceptor. CoA-binding positions include Lys-418 and 422–429; that span reads KKFKVSPD. Positions 451, 453, and 464 each coordinate (R)-carnitine. Gln-553 is a binding site for CoA. Positions 625–627 match the Microbody targeting signal motif; that stretch reads PKL.

The protein belongs to the carnitine/choline acetyltransferase family.

It localises to the peroxisome. The protein resides in the mitochondrion inner membrane. It carries out the reaction (R)-carnitine + acetyl-CoA = O-acetyl-(R)-carnitine + CoA. In terms of biological role, carnitine acetylase is specific for short chain fatty acids. Carnitine acetylase seems to affect the flux through the pyruvate dehydrogenase complex. It may be involved as well in the transport of acetyl-CoA into mitochondria. The chain is Carnitine O-acetyltransferase, mitochondrial (CAT2) from Candida tropicalis (Yeast).